The sequence spans 67 residues: Protein AaeX (67 aa).

Helical transmembrane passes span 3–23 (LFPV…ELLL) and 43–63 (FVWH…YLLS).

Belongs to the AaeX family.

It localises to the cell membrane. The polypeptide is Protein AaeX (Cronobacter sakazakii (strain ATCC BAA-894) (Enterobacter sakazakii)).